A 245-amino-acid polypeptide reads, in one-letter code: DNA polymerase sliding clamp (245 aa).

It belongs to the PCNA family. In terms of assembly, homotrimer. The subunits circularize to form a toroid; DNA passes through its center. Replication factor C (RFC) is required to load the toroid on the DNA.

Sliding clamp subunit that acts as a moving platform for DNA processing. Responsible for tethering the catalytic subunit of DNA polymerase and other proteins to DNA during high-speed replication. The sequence is that of DNA polymerase sliding clamp from Picrophilus torridus (strain ATCC 700027 / DSM 9790 / JCM 10055 / NBRC 100828 / KAW 2/3).